The primary structure comprises 311 residues: ADP-ribosyl cyclase/cyclic ADP-ribose hydrolase 2 (311 aa).

Positions 1 to 24 are cleaved as a signal peptide; it reads MAVQGGLLSLWLWLWLSLLTVLLG. Cystine bridges form between Cys46–Cys60, Cys76–Cys156, and Cys137–Cys150. N-linked (GlcNAc...) asparagine glycans are attached at residues Asn59 and Asn88. An NAD(+)-binding site is contributed by Trp102. Trp102 serves as a coordination point for nicotinamide. N-linked (GlcNAc...) asparagine glycosylation occurs at Asn141. Residue Trp165 participates in NAD(+) binding. The N-linked (GlcNAc...) asparagine glycan is linked to Asn185. NAD(+) is bound at residue Glu203. 2 disulfide bridges follow: Cys231/Cys252 and Cys264/Cys273. Ser286 is lipidated: GPI-anchor amidated serine. Positions 287–311 are excised as a propeptide; the sequence is ASLHAIGDASLLISLLVALASSSQA.

It belongs to the ADP-ribosyl cyclase family. As to quaternary structure, homodimer. Expressed in the bone marrow, spleen and thymus in lymphoid organs, and the lung, kidney and heart in non-lymphoid organs.

The protein resides in the cell membrane. The enzyme catalyses NAD(+) + H2O = ADP-D-ribose + nicotinamide + H(+). The catalysed reaction is NAD(+) = cyclic ADP-beta-D-ribose + nicotinamide + H(+). It carries out the reaction cyclic ADP-beta-D-ribose + H2O = ADP-D-ribose. Its function is as follows. Catalyzes both the synthesis of cyclic ADP-beta-D-ribose (cADPR) from NAD(+), and its hydrolysis to ADP-D-ribose (ADPR). Cyclic ADPR is known to serve as an endogenous second messenger that elicits calcium release from intracellular stores, and thus regulates the mobilization of intracellular calcium. May be involved in pre-B-cell growth. This Mus musculus (Mouse) protein is ADP-ribosyl cyclase/cyclic ADP-ribose hydrolase 2 (Bst1).